The sequence spans 503 residues: ATP synthase subunit alpha (503 aa).

Residue 171–178 (DRQTGKTA) participates in ATP binding.

This sequence belongs to the ATPase alpha/beta chains family. F-type ATPases have 2 components, CF(1) - the catalytic core - and CF(0) - the membrane proton channel. CF(1) has five subunits: alpha(3), beta(3), gamma(1), delta(1), epsilon(1). CF(0) has four main subunits: a(1), b(1), b'(1) and c(9-12).

The protein resides in the cellular thylakoid membrane. It catalyses the reaction ATP + H2O + 4 H(+)(in) = ADP + phosphate + 5 H(+)(out). Produces ATP from ADP in the presence of a proton gradient across the membrane. The alpha chain is a regulatory subunit. This Synechococcus sp. (strain PCC 6716) protein is ATP synthase subunit alpha.